The primary structure comprises 571 residues: MDRAVSRVVLENEEREAKNTWRFVFRIAVLLLIVMTLAISAAALVYSMGASTPRDLASISTAISKMEDKITSSLSSNQDVVDRIYKQVALESPLALLNTESIIMNAITSLSYQINGAANNSGCGAPVHDPDYIGGIGKELIVDDTSDVTSFYPSAYQEHLNFIPAPTTGSGCTRIPSFDMSATHYCYTHNVILSGCRDHSHSHQYLALGVLRTSATGKVFFSTLRSINLDDTQNRKSCSVSATPLGCDMLCSKVTETEEEDYKSVTPTSMVHGRFRFDGQYHEKDSDRTTLFKDWVANYPGVGGGSFIDDRVWFPIYGGLKPNSPSDIAQEGKYVIYKRYNNTFPDKQDYQIRMAKSSYKPGRFGGKRVQQAILSIKVSTSLGEDPVLTVPPNTITLMGAEGRVLTVGTSHFLYQRGSSYFSPALLYPMTVYQQTATLHSPYTFNAFTRPGSVPCQASARCPNSCITGVYTDPYPLVFHRNHTLRGVFGTMLDDEQARLNPVSAVFDNISRSRVTRVSSSSTKAAYTTSTCFKVVKTSKAYCLSIAEISNTLFGEFRIVPLLVEILKDDRV.

Topologically, residues 1–26 are intravirion; sequence MDRAVSRVVLENEEREAKNTWRFVFR. A helical transmembrane segment spans residues 27-47; sequence IAVLLLIVMTLAISAAALVYS. Topologically, residues 48-571 are virion surface; sequence MGASTPRDLA…LVEILKDDRV (524 aa). Asparagine 119 carries N-linked (GlcNAc...) asparagine; by host glycosylation. Residues 124–152 form an important for interaction with fusion/F protein region; the sequence is GAPVHDPDYIGGIGKELIVDDTSDVTSFY. Cystine bridges form between cysteine 172/cysteine 196, cysteine 186/cysteine 247, and cysteine 238/cysteine 251. Residues 234–239 are involved in neuraminidase activity; the sequence is NRKSCS. A glycan (N-linked (GlcNAc...) asparagine; by host) is linked at asparagine 341. Residues cysteine 455 and cysteine 465 are joined by a disulfide bond. Residues asparagine 481 and asparagine 508 are each glycosylated (N-linked (GlcNAc...) asparagine; by host). A disulfide bridge connects residues cysteine 531 and cysteine 542.

The protein belongs to the paramyxoviruses hemagglutinin-neuraminidase family. Homotetramer; composed of disulfide-linked homodimers. Interacts with F protein trimer. Interacts with host CG-1B; this interaction inhibits viral adsorption and replication rather than internalization.

Its subcellular location is the virion membrane. It is found in the host cell membrane. The catalysed reaction is Hydrolysis of alpha-(2-&gt;3)-, alpha-(2-&gt;6)-, alpha-(2-&gt;8)- glycosidic linkages of terminal sialic acid residues in oligosaccharides, glycoproteins, glycolipids, colominic acid and synthetic substrates.. In terms of biological role, mediates the viral entry into the host cell together with fusion/F protein. Attaches the virus to sialic acid-containing cell receptors and thereby initiates infection. Binding of HN protein to the receptor induces a conformational change that allows the F protein to trigger virion/cell membranes fusion. Its function is as follows. Neuraminidase activity ensures the efficient spread of the virus by dissociating the mature virions from the neuraminic acid containing glycoproteins. This Newcastle disease virus (strain Iba/85) (NDV) protein is Hemagglutinin-neuraminidase (HN).